The sequence spans 452 residues: GATA-binding factor 2 (452 aa).

The disordered stretch occupies residues 130–182 (GGSLYPGTGSSACPSSSHSSPHLFGFPPTPPKDVSPDPGPASPPSSSRLEDKD). Over residues 139–151 (SSACPSSSHSSPH) the composition is skewed to low complexity. Over residues 156–172 (PPTPPKDVSPDPGPASP) the composition is skewed to pro residues. GATA-type zinc fingers lie at residues 267–291 (CVNC…CNAC) and 321–345 (CANC…CNAC). Over residues 426–438 (QTPTPIHPSSSLS) the composition is skewed to polar residues. Residues 426 to 452 (QTPTPIHPSSSLSFGHPHHSSMVTAMG) form a disordered region.

Expressed in the developing ventral blood island, and in the embryonic nervous system.

Its subcellular location is the nucleus. This is GATA-binding factor 2 (gata2) from Xenopus laevis (African clawed frog).